The following is a 92-amino-acid chain: uncharacterized protein (92 aa).

In terms of domain architecture, HMA spans 24–89; that stretch reads KQIVLKVKEM…AIHKLKYTAE (66 aa). The a metal cation site is built by cysteine 35 and cysteine 38.

This is an uncharacterized protein from Haemophilus influenzae (strain ATCC 51907 / DSM 11121 / KW20 / Rd).